A 241-amino-acid polypeptide reads, in one-letter code: UDP-2,3-diacylglucosamine hydrolase (241 aa).

Mn(2+) is bound by residues D8, H10, D41, N79, and H114. A substrate-binding site is contributed by N79–R80. Residues D122, S160, N164, K167, and H195 each coordinate substrate. Mn(2+) is bound by residues H195 and H197.

It belongs to the LpxH family. It depends on Mn(2+) as a cofactor.

The protein localises to the cell inner membrane. It catalyses the reaction UDP-2-N,3-O-bis[(3R)-3-hydroxytetradecanoyl]-alpha-D-glucosamine + H2O = 2-N,3-O-bis[(3R)-3-hydroxytetradecanoyl]-alpha-D-glucosaminyl 1-phosphate + UMP + 2 H(+). It participates in glycolipid biosynthesis; lipid IV(A) biosynthesis; lipid IV(A) from (3R)-3-hydroxytetradecanoyl-[acyl-carrier-protein] and UDP-N-acetyl-alpha-D-glucosamine: step 4/6. In terms of biological role, hydrolyzes the pyrophosphate bond of UDP-2,3-diacylglucosamine to yield 2,3-diacylglucosamine 1-phosphate (lipid X) and UMP by catalyzing the attack of water at the alpha-P atom. Involved in the biosynthesis of lipid A, a phosphorylated glycolipid that anchors the lipopolysaccharide to the outer membrane of the cell. This Aeromonas hydrophila subsp. hydrophila (strain ATCC 7966 / DSM 30187 / BCRC 13018 / CCUG 14551 / JCM 1027 / KCTC 2358 / NCIMB 9240 / NCTC 8049) protein is UDP-2,3-diacylglucosamine hydrolase.